Here is a 288-residue protein sequence, read N- to C-terminus: Prohibitin-1, mitochondrial (288 aa).

Over 1 to 10 (MNNVKVPKIP) the chain is Mitochondrial matrix. The helical; Signal-anchor for type II membrane protein transmembrane segment at 11-30 (GGGAISTLLKVGIIGGLGLY) threads the bilayer. The Mitochondrial intermembrane portion of the chain corresponds to 31–288 (GATHSLYNVE…GMNLDVDAKN (258 aa)). Residues 186–219 (KEFTAAIEAKQVAAQEAERAKFIVEKAEQDKRSA) are a coiled coil.

Belongs to the prohibitin family. In terms of assembly, component of a prohibitin multimeric complex in mitochondrial membranes. Mostly expressed in proliferative tissues, including vasculature, shoot and root apical tissues.

The protein localises to the mitochondrion inner membrane. In terms of biological role, prohibitin probably acts as a holdase/unfoldase for the stabilization of newly synthesized mitochondrial proteins. The sequence is that of Prohibitin-1, mitochondrial (PHB1) from Arabidopsis thaliana (Mouse-ear cress).